A 337-amino-acid polypeptide reads, in one-letter code: Visual pigment-like receptor peropsin (337 aa).

Topologically, residues 1-26 are extracellular; sequence MLRNNLGNSSDSKNEDGSVFSQTEHN. N-linked (GlcNAc...) asparagine glycosylation is present at asparagine 8. A helical transmembrane segment spans residues 27–49; that stretch reads IVATYLIMAGMISIISNIIVLGI. Residues 50–61 lie on the Cytoplasmic side of the membrane; the sequence is FIKYKELRTPTN. The chain crosses the membrane as a helical span at residues 62 to 87; the sequence is AIIINLAVTDIGVSSIGYPMSAASDL. The Extracellular portion of the chain corresponds to 88-101; the sequence is YGSWKFGYAGCQVY. Cysteine 98 and cysteine 175 are disulfide-bonded. A helical transmembrane segment spans residues 102–121; the sequence is AGLNIFFGMASIGLLTVVAV. At 122–140 the chain is on the cytoplasmic side; it reads DRYLTICLPDVGRRMTTNT. Residues 141-164 traverse the membrane as a helical segment; the sequence is YIGLILGAWINGLFWALMPIIGWA. Residues 165–188 lie on the Extracellular side of the membrane; it reads SYAPDPTGATCTINWRKNDRSFVS. The chain crosses the membrane as a helical span at residues 189–212; the sequence is YTMTVIAINFIVPLTVMFYCYYHV. Residues 213–240 are Cytoplasmic-facing; sequence TLSIKHHTTSDCTESLNRDWSDQIDVTK. The chain crosses the membrane as a helical span at residues 241 to 264; it reads MSVIMICMFLVAWSPYSIVCLWAS. The Extracellular segment spans residues 265–272; the sequence is FGDPKKIP. The chain crosses the membrane as a helical span at residues 273-297; the sequence is PPMAIIAPLFAKSSTFYNPCIYVVA. Lysine 284 carries the N6-(retinylidene)lysine modification. Over 298 to 337 the chain is Cytoplasmic; sequence NKKFRRAMLAMFKCQTHQTMPVTSILPMDVSQNPLASGRI.

The protein belongs to the G-protein coupled receptor 1 family. Opsin subfamily. As to expression, found only in the eye, where it is localized to the retinal pigment epithelium (RPE). In the RPE, it is localized to the microvilli that surround the photoreceptor outer segments.

The protein resides in the membrane. May play a role in rpe physiology either by detecting light directly or by monitoring the concentration of retinoids or other photoreceptor-derived compounds. This chain is Visual pigment-like receptor peropsin (RRH), found in Homo sapiens (Human).